We begin with the raw amino-acid sequence, 426 residues long: MSYEDAEYIREMAMKHSEMFGEGIALIASENVMSPLAKEVMISDLESRYAEGLPHHRYYQGNYYVDLIEDRTNELLSKLFRTSQTDPRPISGTNANSAAIYALAGPGDLVATPSLSGGGHISAAEFGILGMRSVRTINYPYDMDTMTIDPDQASKMIIKEKPKVCLFGQSVFMFPAPLKEMAEAFHEVGCKVWYDGAHVLGLIAGGRFQDPLREGADIVTGSTHKTFPGPQHGVILGNTDDETWKAVRRAVFPGVLSNHHLNAMAALGITAAEELEFGKRYADDIISNAKVLAEELYANGFNVLAEKRGFTESHTMAVDVSKNGGGKYVAETLEKCGIILNKNLLPWDDNKKSQNPSGIRIGVQEATRVGMGKSEMKEIASLITRAIIRHEDPEKIKAEVKQLKSGFREVKYCYGKMDGYSYIKLI.

(6S)-5,6,7,8-tetrahydrofolate is bound by residues Leu-115 and 119 to 121 (GHI). Residue Lys-225 is modified to N6-(pyridoxal phosphate)lysine.

This sequence belongs to the SHMT family. As to quaternary structure, homodimer. Pyridoxal 5'-phosphate serves as cofactor.

The protein localises to the cytoplasm. It participates in amino-acid biosynthesis; glycine biosynthesis; glycine from L-serine: step 1/1. Catalyzes the reversible interconversion of serine and glycine with a modified folate serving as the one-carbon carrier. Also exhibits a pteridine-independent aldolase activity toward beta-hydroxyamino acids, producing glycine and aldehydes, via a retro-aldol mechanism. The polypeptide is Serine hydroxymethyltransferase (Thermoplasma acidophilum (strain ATCC 25905 / DSM 1728 / JCM 9062 / NBRC 15155 / AMRC-C165)).